Here is a 367-residue protein sequence, read N- to C-terminus: MQAPRELAVGIDLGTTYSCVGVFQQGRVEILANDQGNRTTPSYVAFTDTERLVGDAAKSQAALNPHNTVFDAKRLIGRKFADTTVQSDMKHWPFQVVSEGGKPKVRVCYRGEDKTFYPEEISSMVLSKMKETAEAYLGQPVKHAVITVPTYFSNSQRQATKDAGAIAGLKVLPIINEATAAAIAYGLDRRGAGKRNVLIFDLGGGTFDVSVLSIDAGVFEVKATAGDTHLGGEDFDNRLVNHFMEEFRRKHGKDLSGNKRALRRLRTACERAKRTPSSSTQATLEIDSLFEGVDFYKSITRARFEELCSDLFRSTLEPVEKALRDAKLDKAQIHDFVLGGGLHSHPQGAEVAAGLLQRQGAEQEHQP.

Belongs to the heat shock protein 70 family.

The protein is Putative heat shock 70 kDa protein 7 (HSPA7) of Homo sapiens (Human).